A 93-amino-acid polypeptide reads, in one-letter code: Small ribosomal subunit protein uS19 (93 aa).

Disordered regions lie at residues 1–24 (MPRS…AQNE) and 73–93 (EFAP…GRRR). 2 stretches are compositionally biased toward basic and acidic residues: residues 9–21 (PFVD…KVDA) and 81–93 (KGHE…GRRR).

The protein belongs to the universal ribosomal protein uS19 family.

Protein S19 forms a complex with S13 that binds strongly to the 16S ribosomal RNA. This is Small ribosomal subunit protein uS19 from Kineococcus radiotolerans (strain ATCC BAA-149 / DSM 14245 / SRS30216).